The sequence spans 291 residues: Bifunctional protein FolD (291 aa).

Residues 168–170 (GRG), threonine 195, and isoleucine 236 each bind NADP(+).

This sequence belongs to the tetrahydrofolate dehydrogenase/cyclohydrolase family. Homodimer.

It catalyses the reaction (6R)-5,10-methylene-5,6,7,8-tetrahydrofolate + NADP(+) = (6R)-5,10-methenyltetrahydrofolate + NADPH. It carries out the reaction (6R)-5,10-methenyltetrahydrofolate + H2O = (6R)-10-formyltetrahydrofolate + H(+). It functions in the pathway one-carbon metabolism; tetrahydrofolate interconversion. In terms of biological role, catalyzes the oxidation of 5,10-methylenetetrahydrofolate to 5,10-methenyltetrahydrofolate and then the hydrolysis of 5,10-methenyltetrahydrofolate to 10-formyltetrahydrofolate. In Bifidobacterium longum subsp. infantis (strain ATCC 15697 / DSM 20088 / JCM 1222 / NCTC 11817 / S12), this protein is Bifunctional protein FolD.